The primary structure comprises 342 residues: Non-homologous end-joining protein 1 (342 aa).

2 consecutive transmembrane segments (helical) span residues 27–47 (LLLF…LVSL) and 129–149 (MFYM…NLST). The tract at residues 173–342 (LRDLDGGSKV…RKFGKVRIKN (170 aa)) is interaction with LIF1. Residues 270-342 (ADPTNEARPN…RKFGKVRIKN (73 aa)) are disordered. Positions 286–296 (PKTDFKPKSRE) are enriched in basic and acidic residues. The segment covering 297–312 (SSTSSQLRLENFSESE) has biased composition (polar residues). The span at 331–342 (KKRKFGKVRIKN) shows a compositional bias: basic residues.

The protein belongs to the XRCC4-XLF family. XLF subfamily. Interacts (via C-terminus) with LIF1 (via N-terminus); the interaction is direct. Interacts with DNL4.

The protein resides in the cytoplasm. The protein localises to the nucleus membrane. Involved in non-homologous end joining (NHEJ). Facilitates the transport of LIF1 into the nucleus, where it can interact with DNA ligase DNL4 to repair double-strand breaks (DSB). Mediates mating-type regulation of NHEJ. Prevents chromosome circularisation by NHEJ in absence of telomerase. This Saccharomyces cerevisiae (strain ATCC 204508 / S288c) (Baker's yeast) protein is Non-homologous end-joining protein 1 (NEJ1).